The sequence spans 223 residues: Deoxyribose-phosphate aldolase (223 aa).

Catalysis depends on aspartate 89, which acts as the Proton donor/acceptor. The active-site Schiff-base intermediate with acetaldehyde is lysine 152. Lysine 181 serves as the catalytic Proton donor/acceptor.

This sequence belongs to the DeoC/FbaB aldolase family. DeoC type 1 subfamily.

It is found in the cytoplasm. It carries out the reaction 2-deoxy-D-ribose 5-phosphate = D-glyceraldehyde 3-phosphate + acetaldehyde. It functions in the pathway carbohydrate degradation; 2-deoxy-D-ribose 1-phosphate degradation; D-glyceraldehyde 3-phosphate and acetaldehyde from 2-deoxy-alpha-D-ribose 1-phosphate: step 2/2. In terms of biological role, catalyzes a reversible aldol reaction between acetaldehyde and D-glyceraldehyde 3-phosphate to generate 2-deoxy-D-ribose 5-phosphate. This Bacillus cereus (strain B4264) protein is Deoxyribose-phosphate aldolase.